The sequence spans 379 residues: Protein RecA (379 aa).

Low complexity predominate over residues 1 to 14 (MSNEIKSISSSNSS). The disordered stretch occupies residues 1-24 (MSNEIKSISSSNSSCPPNEARSGE). 84–91 (GPESSGKT) contacts ATP.

This sequence belongs to the RecA family.

It is found in the cytoplasm. Can catalyze the hydrolysis of ATP in the presence of single-stranded DNA, the ATP-dependent uptake of single-stranded DNA by duplex DNA, and the ATP-dependent hybridization of homologous single-stranded DNAs. It interacts with LexA causing its activation and leading to its autocatalytic cleavage. The polypeptide is Protein RecA (Prochlorococcus marinus (strain SARG / CCMP1375 / SS120)).